The sequence spans 211 residues: Large ribosomal subunit protein uL4 (211 aa).

Positions 40-87 (QQAHTRQGTASTLTRSEVRGGGRKPYKQKGTGRARQGSIRTPLRPGGG) are disordered. A compositionally biased stretch (polar residues) spans 41–54 (QAHTRQGTASTLTR). Residues 60–71 (GGRKPYKQKGTG) are compositionally biased toward basic residues.

This sequence belongs to the universal ribosomal protein uL4 family. As to quaternary structure, part of the 50S ribosomal subunit.

Its function is as follows. One of the primary rRNA binding proteins, this protein initially binds near the 5'-end of the 23S rRNA. It is important during the early stages of 50S assembly. It makes multiple contacts with different domains of the 23S rRNA in the assembled 50S subunit and ribosome. Forms part of the polypeptide exit tunnel. This is Large ribosomal subunit protein uL4 from Synechococcus sp. (strain WH7803).